The following is a 97-amino-acid chain: Small ribosomal subunit protein bS20 (97 aa).

Belongs to the bacterial ribosomal protein bS20 family.

Functionally, binds directly to 16S ribosomal RNA. This Prochlorococcus marinus (strain MIT 9215) protein is Small ribosomal subunit protein bS20.